A 442-amino-acid polypeptide reads, in one-letter code: Asparagine--tRNA ligase (442 aa).

Belongs to the class-II aminoacyl-tRNA synthetase family. Homodimer.

It localises to the cytoplasm. The enzyme catalyses tRNA(Asn) + L-asparagine + ATP = L-asparaginyl-tRNA(Asn) + AMP + diphosphate + H(+). The polypeptide is Asparagine--tRNA ligase (Koribacter versatilis (strain Ellin345)).